Reading from the N-terminus, the 632-residue chain is 1-deoxy-D-xylulose-5-phosphate synthase (632 aa).

Residues 1 to 25 are disordered; that stretch reads MPTTFHEIPRKRPTTPLLDRANTPD. Residues histidine 87 and 128-130 each bind thiamine diphosphate; that span reads GHS. Residue aspartate 159 participates in Mg(2+) binding. Thiamine diphosphate contacts are provided by residues 160-161, asparagine 188, phenylalanine 295, and glutamate 378; that span reads GA. Asparagine 188 provides a ligand contact to Mg(2+).

This sequence belongs to the transketolase family. DXPS subfamily. As to quaternary structure, homodimer. It depends on Mg(2+) as a cofactor. Thiamine diphosphate is required as a cofactor.

The enzyme catalyses D-glyceraldehyde 3-phosphate + pyruvate + H(+) = 1-deoxy-D-xylulose 5-phosphate + CO2. Its pathway is metabolic intermediate biosynthesis; 1-deoxy-D-xylulose 5-phosphate biosynthesis; 1-deoxy-D-xylulose 5-phosphate from D-glyceraldehyde 3-phosphate and pyruvate: step 1/1. Functionally, catalyzes the acyloin condensation reaction between C atoms 2 and 3 of pyruvate and glyceraldehyde 3-phosphate to yield 1-deoxy-D-xylulose-5-phosphate (DXP). This Pseudomonas fluorescens (strain Pf0-1) protein is 1-deoxy-D-xylulose-5-phosphate synthase.